We begin with the raw amino-acid sequence, 320 residues long: Ubiquinone biosynthesis protein COQ4, mitochondrial (320 aa).

The transit peptide at 1-31 (MFARSALGRSDQLVTALNSQKRQFVLTAATT) directs the protein to the mitochondrion. Zn(2+) contacts are provided by His205, Asp206, His209, and Glu221.

This sequence belongs to the COQ4 family. In terms of assembly, component of a multi-subunit COQ enzyme complex, composed of at least COQ3, COQ4, COQ5, COQ6, COQ7 and COQ9. The cofactor is Zn(2+).

Its subcellular location is the mitochondrion inner membrane. The enzyme catalyses a 4-hydroxy-3-methoxy-5-(all-trans-polyprenyl)benzoate + H(+) = a 2-methoxy-6-(all-trans-polyprenyl)phenol + CO2. Its pathway is cofactor biosynthesis; ubiquinone biosynthesis. In terms of biological role, lyase that catalyzes the C1-decarboxylation of 4-hydroxy-3-methoxy-5-(all-trans-polyprenyl)benzoic acid into 2-methoxy-6-(all-trans-polyprenyl)phenol during ubiquinone biosynthesis. The polypeptide is Ubiquinone biosynthesis protein COQ4, mitochondrial (Scheffersomyces stipitis (strain ATCC 58785 / CBS 6054 / NBRC 10063 / NRRL Y-11545) (Yeast)).